The chain runs to 510 residues: NAD(P)H-quinone oxidoreductase subunit 2 B, chloroplastic (510 aa).

Helical transmembrane passes span 24–44 (LLFF…GLIL), 57–77 (IPWL…ALLF), 99–119 (IFQF…VEYI), 124–144 (MAIT…MFLC), 149–169 (LITI…LSGY), 183–203 (YLLM…WLYG), 227–247 (PGIS…LSPA), 295–315 (WHLL…LIAI), 323–343 (MLAY…IVGD), 354–374 (YMLF…LFGL), 395–415 (ALSL…AGFF), 418–438 (LYLF…IGLL), and 484–504 (MIVC…IIAI).

Belongs to the complex I subunit 2 family. As to quaternary structure, NDH is composed of at least 16 different subunits, 5 of which are encoded in the nucleus.

Its subcellular location is the plastid. It localises to the chloroplast thylakoid membrane. It carries out the reaction a plastoquinone + NADH + (n+1) H(+)(in) = a plastoquinol + NAD(+) + n H(+)(out). The catalysed reaction is a plastoquinone + NADPH + (n+1) H(+)(in) = a plastoquinol + NADP(+) + n H(+)(out). In terms of biological role, NDH shuttles electrons from NAD(P)H:plastoquinone, via FMN and iron-sulfur (Fe-S) centers, to quinones in the photosynthetic chain and possibly in a chloroplast respiratory chain. The immediate electron acceptor for the enzyme in this species is believed to be plastoquinone. Couples the redox reaction to proton translocation, and thus conserves the redox energy in a proton gradient. In Guizotia abyssinica (Niger), this protein is NAD(P)H-quinone oxidoreductase subunit 2 B, chloroplastic.